The following is a 921-amino-acid chain: Probable serine/threonine-protein kinase DDB_G0275165 (921 aa).

In terms of domain architecture, Protein kinase spans 23 to 277; that stretch reads FDPLSIIGSG…SNILGLLEYI (255 aa). ATP is bound by residues 29–37 and lysine 50; that span reads IGSGGFGKV. Catalysis depends on aspartate 147, which acts as the Proton acceptor. Disordered regions lie at residues 289-453, 465-492, 530-571, 583-653, 671-698, 737-813, 833-858, and 877-921; these read DYEP…SFPR, RGEE…NEED, RPWN…SDSN, NPTP…PTTI, STAT…SNNN, IQPL…SRSL, SSQQ…TSQF, and FEKS…KPKK. 3 stretches are compositionally biased toward low complexity: residues 310–352, 400–412, and 429–445; these read NNNN…NNNN, SNIN…NNSN, and NING…NNNN. 2 stretches are compositionally biased toward low complexity: residues 539–550 and 583–638; these read NNNNKNNNNNEK and NPTP…SLSS. Positions 643-653 are enriched in polar residues; it reads PQSTYKVPTTI. Composition is skewed to low complexity over residues 748-775, 842-857, and 892-910; these read TVAA…PTST, QPSS…PTSQ, and TSSS…PSSP.

This sequence belongs to the protein kinase superfamily. TKL Ser/Thr protein kinase family.

The enzyme catalyses L-seryl-[protein] + ATP = O-phospho-L-seryl-[protein] + ADP + H(+). The catalysed reaction is L-threonyl-[protein] + ATP = O-phospho-L-threonyl-[protein] + ADP + H(+). This chain is Probable serine/threonine-protein kinase DDB_G0275165, found in Dictyostelium discoideum (Social amoeba).